Here is a 914-residue protein sequence, read N- to C-terminus: Thyroid peroxidase (914 aa).

The signal sequence occupies residues methionine 1 to glycine 31. At glycine 32–arginine 834 the chain is on the extracellular side. Asparagine 123 carries N-linked (GlcNAc...) asparagine glycosylation. Residues cysteine 136 and cysteine 152 are joined by a disulfide bond. Aspartate 232 provides a ligand contact to heme b. The active-site Proton acceptor is histidine 233. A Ca(2+)-binding site is contributed by aspartate 234. Disulfide bonds link cysteine 253–cysteine 263 and cysteine 257–cysteine 278. Residues asparagine 271 and asparagine 299 are each glycosylated (N-linked (GlcNAc...) asparagine). Residues threonine 313, phenylalanine 315, aspartate 317, and serine 319 each contribute to the Ca(2+) site. Asparagine 334 is a glycosylation site (N-linked (GlcNAc...) asparagine). Heme b contacts are provided by glutamate 387 and histidine 482. 7 disulfides stabilise this stretch: cysteine 586–cysteine 643, cysteine 684–cysteine 709, cysteine 730–cysteine 770, cysteine 756–cysteine 782, cysteine 788–cysteine 802, cysteine 796–cysteine 811, and cysteine 813–cysteine 826. N-linked (GlcNAc...) asparagine glycosylation occurs at asparagine 603. Residues aspartate 728–lysine 783 enclose the Sushi domain. Positions aspartate 784–isoleucine 827 constitute an EGF-like; calcium-binding domain. The chain crosses the membrane as a helical span at residues alanine 835–cysteine 859. Topologically, residues arginine 860–glutamate 914 are cytoplasmic. The segment at phenylalanine 882–glycine 907 is disordered.

The protein belongs to the peroxidase family. XPO subfamily. As to quaternary structure, interacts with DUOX1, DUOX2 and CYBA. Requires Ca(2+) as cofactor. It depends on heme b as a cofactor. In terms of processing, heme is covalently bound through a H(2)O(2)-dependent autocatalytic process. Heme insertion is important for the delivery of protein at the cell surface. Post-translationally, cleaved in its N-terminal part.

The protein localises to the membrane. The enzyme catalyses 2 iodide + H2O2 + 2 H(+) = diiodine + 2 H2O. It carries out the reaction [thyroglobulin]-L-tyrosine + iodide + H2O2 + H(+) = [thyroglobulin]-3-iodo-L-tyrosine + 2 H2O. The catalysed reaction is [thyroglobulin]-3-iodo-L-tyrosine + iodide + H2O2 + H(+) = [thyroglobulin]-3,5-diiodo-L-tyrosine + 2 H2O. It catalyses the reaction 2 [thyroglobulin]-3,5-diiodo-L-tyrosine + H2O2 = [thyroglobulin]-L-thyroxine + [thyroglobulin]-dehydroalanine + 2 H2O. The enzyme catalyses [thyroglobulin]-3-iodo-L-tyrosine + [thyroglobulin]-3,5-diiodo-L-tyrosine + H2O2 = [thyroglobulin]-3,3',5-triiodo-L-thyronine + [thyroglobulin]-dehydroalanine + 2 H2O. Its pathway is hormone biosynthesis; thyroid hormone biosynthesis. Iodination and coupling of the hormonogenic tyrosines in thyroglobulin to yield the thyroid hormones T(3) and T(4). The protein is Thyroid peroxidase (Tpo) of Rattus norvegicus (Rat).